The chain runs to 439 residues: Vacuolar protein sorting-associated protein 4 (439 aa).

An MIT domain is found at 8-75 (LSKGIDLVQK…TRAEQLKDHL (68 aa)). Residues 76-113 (EKQAQNKSTAESSVNGSTKAKKSNGDGNGSGDDNDDAD) are disordered. Residues 80–93 (QNKSTAESSVNGST) show a composition bias toward polar residues. 175–182 (GPPGTGKS) is a binding site for ATP.

Belongs to the AAA ATPase family. Monomer or homodimer (in nucleotide-free form). Decamer, dodecamer or tetradecamer of two stacked respective homooligomeric rings (when bound to ATP); the dodecameric form seems to be predominant.

The protein resides in the endosome membrane. Its function is as follows. Pre-vacuolar protein sorting protein involved in the transport of biosynthetic membrane proteins from the prevacuolar/endosomal compartment to the vacuole. Required for multivesicular body (MVB) protein sorting. Catalyzes the ATP-dependent dissociation of class E VPS proteins from endosomal membranes, such as the disassembly of the ESCRT-III complex. Required for extracellular secretion of the secreted aspartyl proteases SAP2, SAP4, SAP5, and SAP6. Its regulation of the pre-vacuolar secretory pathway is critical for virulence. This is Vacuolar protein sorting-associated protein 4 from Candida albicans (strain SC5314 / ATCC MYA-2876) (Yeast).